A 1544-amino-acid chain; its full sequence is GATOR complex protein Iml1 (1544 aa).

2 disordered regions span residues 615–649 (QAVP…CENG) and 1037–1072 (RRHS…EKRP). Composition is skewed to polar residues over residues 623-639 (QAGQ…NNNN) and 1041-1057 (TSII…TNSP). The span at 1058–1072 (FRERVGSNRLPEKRP) shows a compositional bias: basic and acidic residues.

Belongs to the IML1 family. Component of the GATOR complex consisting of mio, Nup44A/Seh1, Im11, Nplr3, Nplr2, Wdr24, Wdr59 and Sec13. Within the GATOR complex, probable component of the GATOR1 subcomplex which is likely composed of Iml1, Nplr2 and Nplr3.

An essential component of the GATOR subcomplex GATOR1 which functions as an inhibitor of the amino acid-sensing branch of the TORC1 signaling pathway. The two GATOR subcomplexes, GATOR1 and GATOR2, regulate the TORC1 pathway in order to mediate metabolic homeostasis, female gametogenesis and the response to amino acid limitation and complete starvation. The function of GATOR1 in negatively regulating the TORC1 pathway is essential for maintaining baseline levels of TORC1 activity under nutrient rich conditions, and for promoting survival during amino acid or complete starvation by inhibiting TORC1-dependent cell growth and promoting catabolic metabolism and autophagy. GATOR1 and GATOR2 act at different stages of oogenesis to regulate TORC1 in order to control meiotic entry and promote oocyte growth and development. After exactly four mitotic cyst divisions, the GATOR1 complex members (Iml1, Nprl2 and Nprl3) down-regulate TORC1 to slow cellular metabolism and promote the mitotic/meiotic transition. At later stages of oogenesis, the mio and Nup44A components of the GATOR2 complex inhibit GATOR1 and thus activate TORC1 to promote meiotic progression, and drive oocyte growth and development. This is GATOR complex protein Iml1 from Drosophila melanogaster (Fruit fly).